The primary structure comprises 578 residues: Putative diflavin flavoprotein A 2 (578 aa).

The interval 39-233 is zinc metallo-hydrolase; it reads QQGTTSNSYL…PPPRLYAPAH (195 aa). The Flavodoxin-like domain maps to 262–404; the sequence is VALFYASAYG…AANEFAQALK (143 aa). The interval 429–578 is flavodoxin-reductase-like; the sequence is VNRVVGSLCV…TAIQHRKTSS (150 aa).

It in the N-terminal section; belongs to the zinc metallo-hydrolase group 3 family. The protein in the C-terminal section; belongs to the flavodoxin reductase family. Fe cation serves as cofactor.

In terms of biological role, mediates electron transfer from NADH to oxygen, reducing it to water. This modular protein has 3 redox cofactors, in other organisms the same activity requires 2 or 3 proteins. This chain is Putative diflavin flavoprotein A 2 (dfa2), found in Thermosynechococcus vestitus (strain NIES-2133 / IAM M-273 / BP-1).